Reading from the N-terminus, the 312-residue chain is Lipoyl synthase (312 aa).

Positions 37, 42, 48, 67, 71, 74, and 281 each coordinate [4Fe-4S] cluster. The Radical SAM core domain occupies 52 to 270 (RDGPGTATFM…AVAEREFDFL (219 aa)).

The protein belongs to the radical SAM superfamily. Lipoyl synthase family. [4Fe-4S] cluster is required as a cofactor.

It localises to the cytoplasm. It carries out the reaction [[Fe-S] cluster scaffold protein carrying a second [4Fe-4S](2+) cluster] + N(6)-octanoyl-L-lysyl-[protein] + 2 oxidized [2Fe-2S]-[ferredoxin] + 2 S-adenosyl-L-methionine + 4 H(+) = [[Fe-S] cluster scaffold protein] + N(6)-[(R)-dihydrolipoyl]-L-lysyl-[protein] + 4 Fe(3+) + 2 hydrogen sulfide + 2 5'-deoxyadenosine + 2 L-methionine + 2 reduced [2Fe-2S]-[ferredoxin]. It functions in the pathway protein modification; protein lipoylation via endogenous pathway; protein N(6)-(lipoyl)lysine from octanoyl-[acyl-carrier-protein]: step 2/2. In terms of biological role, catalyzes the radical-mediated insertion of two sulfur atoms into the C-6 and C-8 positions of the octanoyl moiety bound to the lipoyl domains of lipoate-dependent enzymes, thereby converting the octanoylated domains into lipoylated derivatives. This is Lipoyl synthase from Halorubrum lacusprofundi (strain ATCC 49239 / DSM 5036 / JCM 8891 / ACAM 34).